A 729-amino-acid chain; its full sequence is Circadian input-output histidine kinase CikA (729 aa).

An N-terminal domain region spans residues 1–169 (MPQPIFDRIL…QVTTQIRQSL (169 aa)). Residues 170–314 (ELPELLKIAV…VEFLTHLSQH (145 aa)) are GAF domain. A Histidine kinase domain is found at 366–587 (TMSHELRTPL…TFTVGLPAIS (222 aa)). At histidine 369 the chain carries Phosphohistidine; by autocatalysis. The segment at 613 to 729 (EGRIVLVSED…GLTSLATSAQ (117 aa)) is psR domain, binds KaiB.

The protein in the N-terminal section; belongs to the phytochrome family. Homodimer. Part of the circadian clock (KaiA, KaiB, KaiC, CikA, RpaA, SasA), the composition of which varies during the circadian cycle. KaiA and CikA compete for binding to KaiB(fs). The PsR domain binds the KaiB:KaiC CI complex but poorly to either protein alone. KaiA and CikA bind to the same region of the KaiB(fs) form and therefore compete.

The catalysed reaction is ATP + protein L-histidine = ADP + protein N-phospho-L-histidine.. In terms of biological role, functions in an input pathway to the Kai circadian clock. Senses oxidized quinones via its C-terminal pseudo-receiver domain, providing a link between cell metabolism and the clock. Affects the ratio of phosphorylated to unphosphorylated KaiC, binds quinones via its pseudo-receptor domain. Quinone-binding destabilizes the protein rapidly. Autophosphorylates, does not transfer the phosphate to its pseudo-receiver (PsR) domain. May play a role in cell division. Functionally, also functions in a two-component CikA/RpaA output pathway from the circadian clock, negatively regulating kaiBC expression independently of labA and of sasA. One of three clock output pathways. Dephosphorylates phospho-RpaA, enhanced by KaiB and KaiC, has only modest kinase activity on RpaA. This Thermosynechococcus vestitus (strain NIES-2133 / IAM M-273 / BP-1) protein is Circadian input-output histidine kinase CikA.